Here is a 433-residue protein sequence, read N- to C-terminus: 26S proteasome regulatory subunit 7 (433 aa).

The segment at 1 to 22 (MPDYLGADQRKTKEDEKDDKPI) is disordered. Basic and acidic residues predominate over residues 8 to 22 (DQRKTKEDEKDDKPI). Residue Lys116 is modified to N6-acetyllysine. 216 to 223 (GPPGTGKT) is a binding site for ATP. Lys422 carries the post-translational modification N6-acetyllysine.

Belongs to the AAA ATPase family. In terms of assembly, component of the 19S proteasome regulatory particle complex. The 26S proteasome consists of a 20S core particle (CP) and two 19S regulatory subunits (RP). The regulatory particle is made of a lid composed of 9 subunits, a base containing 6 ATPases including PSMC2 and few additional components. Interacts with NDC80 and SQSTM1. Interacts with PAAF1. Interacts with TRIM5. In terms of processing, monoubiquitinated by RNF181. Phosphorylated. Dephosphorylated by UBLCP1 which impairs PSMC2 ATPase activity and disrupts 26S proteasome assembly.

Its subcellular location is the cytoplasm. Component of the 26S proteasome, a multiprotein complex involved in the ATP-dependent degradation of ubiquitinated proteins. This complex plays a key role in the maintenance of protein homeostasis by removing misfolded or damaged proteins, which could impair cellular functions, and by removing proteins whose functions are no longer required. Therefore, the proteasome participates in numerous cellular processes, including cell cycle progression, apoptosis, or DNA damage repair. PSMC2 belongs to the heterohexameric ring of AAA (ATPases associated with diverse cellular activities) proteins that unfolds ubiquitinated target proteins that are concurrently translocated into a proteolytic chamber and degraded into peptides. The protein is 26S proteasome regulatory subunit 7 (Psmc2) of Rattus norvegicus (Rat).